Here is an 889-residue protein sequence, read N- to C-terminus: Heat shock protein 70 homolog LHS1 (889 aa).

An N-terminal signal peptide occupies residues 1–15 (MKLSILFLFAIAVQA). Asn111, Asn366, Asn462, Asn502, Asn515, Asn716, and Asn752 each carry an N-linked (GlcNAc...) asparagine glycan. A disordered region spans residues 811–889 (IKKQEKQNEN…SAGNVFDDEL (79 aa)). Composition is skewed to acidic residues over residues 820 to 833 (NEENGDDEGDDEDE) and 868 to 889 (DEEDEEEEEDDSSAGNVFDDEL). Positions 886-889 (DDEL) match the Prevents secretion from ER motif.

This sequence belongs to the heat shock protein 70 family.

Its subcellular location is the endoplasmic reticulum lumen. It catalyses the reaction ATP + H2O = ADP + phosphate + H(+). In terms of biological role, chaperone required for protein translocation and folding in the endoplasmic reticulum. The chain is Heat shock protein 70 homolog LHS1 (LHS1) from Candida glabrata (strain ATCC 2001 / BCRC 20586 / JCM 3761 / NBRC 0622 / NRRL Y-65 / CBS 138) (Yeast).